Here is a 564-residue protein sequence, read N- to C-terminus: Sulfite reductase [NADPH] hemoprotein beta-component 1 (564 aa).

The [4Fe-4S] cluster site is built by Cys-426, Cys-432, Cys-471, and Cys-475. Siroheme is bound at residue Cys-475.

Belongs to the nitrite and sulfite reductase 4Fe-4S domain family. As to quaternary structure, alpha(8)-beta(8). The alpha component is a flavoprotein, the beta component is a hemoprotein. The cofactor is siroheme. [4Fe-4S] cluster is required as a cofactor.

The enzyme catalyses hydrogen sulfide + 3 NADP(+) + 3 H2O = sulfite + 3 NADPH + 4 H(+). It functions in the pathway sulfur metabolism; hydrogen sulfide biosynthesis; hydrogen sulfide from sulfite (NADPH route): step 1/1. Component of the sulfite reductase complex that catalyzes the 6-electron reduction of sulfite to sulfide. This is one of several activities required for the biosynthesis of L-cysteine from sulfate. The polypeptide is Sulfite reductase [NADPH] hemoprotein beta-component 1 (Pectobacterium carotovorum subsp. carotovorum (strain PC1)).